The chain runs to 1382 residues: Suppressor of organelle fusion 2 (1382 aa).

A BEACH domain is found at 229–463 (RIPLDEATSN…QLFNRPHPIR (235 aa)). WD repeat units follow at residues 1094 to 1133 (GHQE…DEIG) and 1140 to 1176 (KHTR…LLAQ).

It belongs to the WD repeat WDR81 family. Interacts with sorf-1; the interaction is direct. Interacts with bec-1.

The protein resides in the early endosome. The protein localises to the late endosome. Its subcellular location is the cytoplasm. Together with sorf-1 negatively regulates the levels of phosphatidylinositol 3-phosphate (PtdIns3P) to enable the conversion of early endosomes to late endosomes. Binds to sorf-1 and the sorf-1-sorf-2 complex likely acts through bec-1, a non-catalytic subunit of phosphatidylinositol 3-kinase (PI3K), to suppress PI3K activity, thereby negatively regulating endosomal PtdIns3P levels. In Caenorhabditis elegans, this protein is Suppressor of organelle fusion 2.